A 1577-amino-acid chain; its full sequence is MAP kinase-activating death domain protein (1577 aa).

A uDENN domain is found at 13–267 (YLVIVGARHP…VPVSGQKRVD (255 aa)). The span at 106 to 121 (KEKVEGGAGPRGKEGA) shows a compositional bias: basic and acidic residues. A disordered region spans residues 106-166 (KEKVEGGAGP…WGKRRAKAGS (61 aa)). Low complexity predominate over residues 123 to 140 (TSGASEEAATGSSESGST). Positions 141–156 (LQPPSADSTPDINQSP) are enriched in polar residues. Position 155 is a phosphoserine (Ser155). Positions 288-428 (RFTLVDFPLH…ESLELKKHLK (141 aa)) constitute a cDENN domain. Positions 430–564 (ALASMSLNTQ…LNPSNYAFQR (135 aa)) constitute a dDENN domain. Disordered stretches follow at residues 604-635 (LSVP…SSYS) and 676-840 (QPQK…NSTE). A compositionally biased stretch (acidic residues) spans 614-629 (SDPTEDSGSDSQDYDD). 2 positions are modified to phosphoserine: Ser688 and Ser691. The span at 688–698 (SENSQENPPLR) shows a compositional bias: polar residues. Residues 699–715 (SSSSTTASSSPSTVVHS) are compositionally biased toward low complexity. Over residues 793-803 (PRFSQHVSGSR) the composition is skewed to polar residues. A phosphoserine mark is found at Ser812, Ser817, and Ser819. Residues 826–839 (RASSPNSTVSNNST) are compositionally biased toward low complexity. Phosphoserine is present on residues Ser857, Ser861, Ser915, Ser920, Ser929, and Ser1058. 3 disordered regions span residues 912–940 (QKSS…SSEN), 1050–1109 (KEPD…DTRS), and 1127–1272 (EVKK…RSSE). Residues 928–938 (SSPQGRSSNSS) are compositionally biased toward low complexity. Thr1060 and Thr1065 each carry phosphothreonine. The residue at position 1109 (Ser1109) is a Phosphoserine. Residues 1127 to 1141 (EVKKQKALEKQRPEG) show a composition bias toward basic and acidic residues. Polar residues predominate over residues 1157 to 1172 (QMSADSGVSLTSASQR). Residues 1189-1203 (SSSQDSEVSTVSNSS) show a composition bias toward low complexity. The segment covering 1232–1248 (SRATLSDSEIETNSATS) has biased composition (polar residues). At Thr1235 the chain carries Phosphothreonine. A phosphoserine mark is found at Ser1237 and Ser1266. The region spanning 1336 to 1411 (GMDQGPQEMI…GLVYSQQVNE (76 aa)) is the Death domain.

The protein belongs to the MADD family. As to quaternary structure, interacts (via death domain) with TNFRSF1A (via death domain). Interacts with PIDD1. Interacts with YWHAZ. Interacts (via death domain) with KIF1B; links the motor KIF1B to Rab3-carrying vesicles in anterograde synaptic vesicle transport. Interacts with KIF1A. Interacts (via uDENN domain) with RAB3A, RAB3B, RAB3C and RAB3D; the GTP-bound form of the Rab proteins is preferred for interaction. Expressed in the brain.

The protein resides in the cell membrane. It is found in the cytoplasm. Its subcellular location is the cell projection. It localises to the axon. Guanyl-nucleotide exchange factor that regulates small GTPases of the Rab family. Converts GDP-bound inactive form of RAB27A and RAB27B to the GTP-bound active forms. Converts GDP-bound inactive form of RAB3A, RAB3C and RAB3D to the GTP-bound active forms, GTPases involved in synaptic vesicle exocytosis and vesicle secretion. Plays a role in synaptic vesicle formation and in vesicle trafficking at the neuromuscular junction. Involved in up-regulating a post-docking step of synaptic exocytosis in central synapses. Probably by binding to the motor proteins KIF1B and KIF1A, mediates motor-dependent transport of GTP-RAB3A-positive vesicles to the presynaptic nerve terminals. Plays a role in TNFA-mediated activation of the MAPK pathway, including ERK1/2. May link TNFRSF1A with MAP kinase activation. May be involved in the regulation of TNFA-induced apoptosis. This chain is MAP kinase-activating death domain protein, found in Mus musculus (Mouse).